The sequence spans 184 residues: Guanylate kinase (184 aa).

One can recognise a Guanylate kinase-like domain in the interval 5–183 (KKLIILTGPS…TAKRIIKLIQ (179 aa)). Residue 12–19 (GPSGVGKG) coordinates ATP.

It belongs to the guanylate kinase family.

Its subcellular location is the cytoplasm. It catalyses the reaction GMP + ATP = GDP + ADP. Essential for recycling GMP and indirectly, cGMP. This is Guanylate kinase from Prochlorococcus marinus (strain MIT 9312).